Consider the following 461-residue polypeptide: Argininosuccinate lyase (461 aa).

It belongs to the lyase 1 family. Argininosuccinate lyase subfamily.

Its subcellular location is the cytoplasm. It catalyses the reaction 2-(N(omega)-L-arginino)succinate = fumarate + L-arginine. It participates in amino-acid biosynthesis; L-arginine biosynthesis; L-arginine from L-ornithine and carbamoyl phosphate: step 3/3. The polypeptide is Argininosuccinate lyase (Chloroflexus aurantiacus (strain ATCC 29366 / DSM 635 / J-10-fl)).